The sequence spans 670 residues: Transcription factor vib-1 (670 aa).

A DNA-binding region (NDT80) is located at residues 106–341 (TEMVQDLRDD…RSPRNFQARK (236 aa)). 2 stretches are compositionally biased toward polar residues: residues 394 to 438 (FTSA…TTSM) and 553 to 568 (LGNS…QHHP). 2 disordered regions span residues 394–457 (FTSA…SYTA) and 496–670 (SAPP…WNAT). Residues 592-605 (ASAPASAPTSAAPP) are compositionally biased toward low complexity. Residues 611–631 (PSQSWTSTAGEGQTSSYTNGG) are compositionally biased toward polar residues.

The protein localises to the nucleus. It localises to the cytoplasm. Transcription factor that acts as a positive regulator of nonrepressible acid phosphatase activity. Is a major regulator of responses to nitrogen and carbon starvation and is essential for the expression of genes involved in vegetative incompatibility (like pin-c, het-6, and tol). Vegetative incompatibility is a non-self-recognition system ubiquitous in filamentous fungi which results in programmed cell death. The protein is Transcription factor vib-1 (vib-1) of Neurospora crassa (strain ATCC 24698 / 74-OR23-1A / CBS 708.71 / DSM 1257 / FGSC 987).